Here is a 541-residue protein sequence, read N- to C-terminus: Chaperonin GroEL (541 aa).

ATP-binding positions include 29–32 (TLGP), 86–90 (DGTTT), Gly413, and Asp494.

Belongs to the chaperonin (HSP60) family. Forms a cylinder of 14 subunits composed of two heptameric rings stacked back-to-back. Interacts with the co-chaperonin GroES.

The protein resides in the cytoplasm. It catalyses the reaction ATP + H2O + a folded polypeptide = ADP + phosphate + an unfolded polypeptide.. Functionally, together with its co-chaperonin GroES, plays an essential role in assisting protein folding. The GroEL-GroES system forms a nano-cage that allows encapsulation of the non-native substrate proteins and provides a physical environment optimized to promote and accelerate protein folding. The chain is Chaperonin GroEL from Acetivibrio thermocellus (strain ATCC 27405 / DSM 1237 / JCM 9322 / NBRC 103400 / NCIMB 10682 / NRRL B-4536 / VPI 7372) (Clostridium thermocellum).